The primary structure comprises 204 residues: Ribonuclease HII (204 aa).

Residues 1–197 (MILGIDEAGR…KNRILNPKLL (197 aa)) form the RNase H type-2 domain. A divalent metal cation contacts are provided by aspartate 6, glutamate 7, and aspartate 103.

Belongs to the RNase HII family. Requires Mn(2+) as cofactor. It depends on Mg(2+) as a cofactor.

It localises to the cytoplasm. The enzyme catalyses Endonucleolytic cleavage to 5'-phosphomonoester.. Functionally, endonuclease that specifically degrades the RNA of RNA-DNA hybrids. The protein is Ribonuclease HII of Helicobacter pylori (strain G27).